Reading from the N-terminus, the 228-residue chain is U1 small nuclear ribonucleoprotein C (228 aa).

The Matrin-type zinc finger occupies 4 to 36 (YYCEYCDIYLTHSSPVGRRQHVQGRKHISAKIE). Residues 179 to 190 (LVKDNPNEERNG) are compositionally biased toward basic and acidic residues. Positions 179–228 (LVKDNPNEERNGDSAIANQPSTMHHEEDQDDPANATGGTANNNDNVSINA) are disordered. Low complexity predominate over residues 211 to 221 (ANATGGTANNN).

The protein belongs to the U1 small nuclear ribonucleoprotein C family. As to quaternary structure, U1 snRNP is composed of the 7 core Sm proteins B/B', D1, D2, D3, E, F and G that assemble in a heptameric protein ring on the Sm site of the small nuclear RNA to form the core snRNP, and at least 3 U1 snRNP-specific proteins U1-70K, U1-A and U1-C. U1-C interacts with U1 snRNA and the 5' splice-site region of the pre-mRNA.

The protein localises to the nucleus. Its function is as follows. Component of the spliceosomal U1 snRNP, which is essential for recognition of the pre-mRNA 5' splice-site and the subsequent assembly of the spliceosome. U1-C is directly involved in initial 5' splice-site recognition for both constitutive and regulated alternative splicing. The interaction with the 5' splice-site seems to precede base-pairing between the pre-mRNA and the U1 snRNA. Stimulates commitment or early (E) complex formation by stabilizing the base pairing of the 5' end of the U1 snRNA and the 5' splice-site region. In Plasmodium knowlesi (strain H), this protein is U1 small nuclear ribonucleoprotein C.